The following is a 345-amino-acid chain: uncharacterized protein (345 aa).

2 PDZ GRASP-type domains span residues Cys-27–Ile-112 and Ala-118–Leu-207. The segment at Cys-27 to Asp-223 is GRASP. A disordered region spans residues Pro-229 to Asn-345. The segment covering Lys-297 to Asp-308 has biased composition (basic and acidic residues). Composition is skewed to polar residues over residues Ala-309–Thr-318 and Val-328–Gln-338.

The protein resides in the golgi apparatus membrane. This is an uncharacterized protein from Schizosaccharomyces pombe (strain 972 / ATCC 24843) (Fission yeast).